A 232-amino-acid polypeptide reads, in one-letter code: Exosome complex component RRP40 (232 aa).

This sequence belongs to the RRP40 family. Component of the RNA exosome complex. Specifically part of the catalytically inactive RNA exosome core complex.

It localises to the cytoplasm. The protein localises to the nucleus. It is found in the nucleolus. In terms of biological role, non-catalytic component of the RNA exosome complex which has 3'-&gt;5' exoribonuclease activity and participates in a multitude of cellular RNA processing and degradation events. In the nucleus, the RNA exosome complex is involved in proper maturation of stable RNA species such as rRNA, snRNA and snoRNA, in the elimination of RNA processing by-products and non-coding 'pervasive' transcripts such as antisense RNA species, and of mRNAs with processing defects, thereby limiting or excluding their export to the cytoplasm. In the cytoplasm, the RNA exosome complex is involved in general mRNA turnover and specifically degrades inherently unstable mRNAs containing AU-rich elements (AREs) within their 3' untranslated regions, and in RNA surveillance pathways, preventing translation of aberrant mRNAs. The catalytic inactive RNA exosome core complex of 9 subunits is proposed to play a pivotal role in the binding and presentation of RNA for ribonucleolysis, and to serve as a scaffold for the association with catalytic subunits and accessory proteins or complexes. Required generally for normal embryonic and neuronal development. Also plays a critical role in the maintenance of neuronal function in mature flies by controlling the levels of specific mRNAs such as the synaptic regulator Arc1. This Drosophila melanogaster (Fruit fly) protein is Exosome complex component RRP40.